The sequence spans 597 residues: uncharacterized protein (597 aa).

The span at 1–23 shows a compositional bias: basic and acidic residues; sequence MSHEGSRQARDRGVTRSKAEKAR. 2 disordered regions span residues 1-32 and 171-192; these read MSHE…VPQV and RESQ…NPRP. A compositionally biased stretch (low complexity) spans 175–186; sequence EPTQSSEPSAEP. Phosphoserine is present on residues Ser-237 and Ser-241. 2 disordered regions span residues 302–335 and 549–569; these read SLLS…MRLD and EAEE…GVSK. Polar residues predominate over residues 557–568; the sequence is APEQQPIQTGVS.

This is an uncharacterized protein from Rattus norvegicus (Rat).